The primary structure comprises 466 residues: MTEKLWQGRFDQPTNRQVEDYTASIHFDNRLYRYDIEGSIAHCRMLAQCKIISHDDASLIVQGLGEIRRELERGKLHLGSSNEDIHMAIEQELMRKIGEVGGKLHTARSRNDQVALDVRLYMRDTLLQCRGLILQTQKVLVSCAEENLGVVMPGFTHLQHAQPILLSHHLMAYYEMLKRDDERFEQCFHRTNVLPLGSAALAGTTFPIDMEWTAKYLNFPRVTSNSIDAVSDRDYLIEFGAASAMLMMHVSRLAEELILWSSTEFDFIEISDAFCTGSSIMPQKKNPDVPELMRGKTGRVYGNLMALLTLTKALPLAYNRDLQEDKEPVFDTADTIISTLRLLSRLIPEIRFHRERMGEMAIQGFTLATDLADYLVKKGVPFRKAHHIVGQIVQYCLKNRKQLHDCTVEELKTFHKTIDQDVFPFLEVAGAIDQRVSIGGTATTRVVEAIEKARAELDALEQSLSS.

This sequence belongs to the lyase 1 family. Argininosuccinate lyase subfamily.

The protein localises to the cytoplasm. It catalyses the reaction 2-(N(omega)-L-arginino)succinate = fumarate + L-arginine. Its pathway is amino-acid biosynthesis; L-arginine biosynthesis; L-arginine from L-ornithine and carbamoyl phosphate: step 3/3. The polypeptide is Argininosuccinate lyase (Syntrophobacter fumaroxidans (strain DSM 10017 / MPOB)).